The primary structure comprises 555 residues: Efflux pump FUS6 (555 aa).

The disordered stretch occupies residues methionine 1–proline 23. The next 5 helical transmembrane spans lie at tryptophan 31–isoleucine 51, leucine 67–alanine 87, serine 97–histidine 117, glycine 130–isoleucine 150, and isoleucine 159–alanine 179. The N-linked (GlcNAc...) asparagine glycan is linked to asparagine 181. The next 3 helical transmembrane spans lie at tryptophan 186–leucine 206, tryptophan 225–glycine 245, and glycine 253–tyrosine 273. N-linked (GlcNAc...) asparagine glycosylation is present at asparagine 291. The next 6 membrane-spanning stretches (helical) occupy residues leucine 297 to valine 317, valine 332 to isoleucine 352, valine 360 to aspartate 380, isoleucine 393 to serine 413, alanine 425 to phenylalanine 445, and lysine 501 to valine 521. Asparagine 545 is a glycosylation site (N-linked (GlcNAc...) asparagine).

This sequence belongs to the major facilitator superfamily. TCR/Tet family.

It localises to the membrane. Functionally, efflux pump; part of the gene cluster that mediates the biosynthesis of the mycotoxin fusarin C. Within the cluster, FUS1, FUS2, FUS8 and FUS9 are sufficient for fusarin production. The other FUS cluster members are not essential for fusarin C biosynthesis. The sequence is that of Efflux pump FUS6 from Gibberella fujikuroi (strain CBS 195.34 / IMI 58289 / NRRL A-6831) (Bakanae and foot rot disease fungus).